The following is a 193-amino-acid chain: Ion-translocating oxidoreductase complex subunit A (193 aa).

6 helical membrane-spanning segments follow: residues 5-25, 47-67, 72-92, 102-122, 134-154, and 171-191; these read LLLFVGTVLVNNFVLVKFLGL, FVMTLASICAWLIDTWILIPL, LRTMAFILVIAVVVQFTEMVV, LLGIFLPLITTNCAVLGVALL, ALYGFSAAVGFSLVMVLFAAI, and AIALITAGLMSLAFMGFSGLV.

This sequence belongs to the NqrDE/RnfAE family. The complex is composed of six subunits: RsxA, RsxB, RsxC, RsxD, RsxE and RsxG.

It is found in the cell inner membrane. Part of a membrane-bound complex that couples electron transfer with translocation of ions across the membrane. Required to maintain the reduced state of SoxR. The chain is Ion-translocating oxidoreductase complex subunit A from Escherichia coli O45:K1 (strain S88 / ExPEC).